A 143-amino-acid chain; its full sequence is Transcription antitermination protein NusB (143 aa).

This sequence belongs to the NusB family.

Involved in transcription antitermination. Required for transcription of ribosomal RNA (rRNA) genes. Binds specifically to the boxA antiterminator sequence of the ribosomal RNA (rrn) operons. The chain is Transcription antitermination protein NusB from Methylacidiphilum infernorum (isolate V4) (Methylokorus infernorum (strain V4)).